Here is a 1048-residue protein sequence, read N- to C-terminus: Copper-dependent transcription factor 1 (1048 aa).

Positions 1-40 (MVLINDKKFACEKCIKGHRVSACTHTDRPLFEVKKKGRPS) form a DNA-binding region, copper-fist. The Zn(2+) site is built by Cys-11, Cys-14, Cys-23, and His-25. A compositionally biased stretch (low complexity) spans 85–99 (ANESGGASATANTSA). Disordered regions lie at residues 85-117 (ANESGGASATANTSAEPEIETRKGQPGSKPTFP) and 178-273 (HSGH…RPPV). The span at 211-222 (TRNSPTSINSSE) shows a compositional bias: polar residues. The CRM-I motif lies at 348–362 (CMCGDDCSCPGCATH). The CRM-II motif lies at 455–482 (CCGGKCGCPPGECACTKQCCGCCGECTC). 2 disordered regions span residues 506–702 (SSCG…PLNS) and 835–876 (GPSG…WKFP). Composition is skewed to polar residues over residues 527–536 (QIPQSVSPTS), 550–565 (PVSTIHHSTLSPSFNT), 629–645 (GSMTATKRSGTSTGVRR), 664–682 (SIQSSSDRSFYIGSPSNQI), and 692–702 (APSQMTAPLNS). Over residues 835-845 (GPSGPSAIPAT) the composition is skewed to low complexity. Polar residues predominate over residues 846–868 (NIPSRHTTPQASRPLTPPESSFT).

The protein resides in the nucleus. The protein localises to the cytoplasm. It localises to the cell cortex. Its function is as follows. Transcription factor that regulates copper acquisition and homeostasis, and which plays a central role in fungal pathogenesis during neurologic infection. The transcriptional regulation exerted by CUF1 is intrinsically complex since it acts as a dual sensor of copper levels, responsible for expression of a set of copper-specific copper transporters, CTR1 and CTR4, at low copper concentrations, and 2 metallothioneins, CMT1 and CMT2, at high copper concentrations. Positively regulates the expression of the copper acquisition factor BIM1 under copper-limiting conditions. Also positively regulates the expression of super oxide dismutase SOD2 isoform 2 during oxidative stress and copper-limiting conditions. Negatively regulates the expression of super oxide dismutase SOD1 during copper-limiting conditions. Also regulates ATM1, an ABC transporter with functions in the iron-sulfur clusters (ISC) export machinery, during copper stress. Another target of CUF1 is the gene encoding the laccase LAC1. Binds promoters of target genes at Cu-responsive elements (CuREs) that contain a variable A/T rich 5' region followed by the core consensus sequence 5'-G(G/C)CTC(A/G)-3'. Negatively regulates capsule biosynthesis, probably via modulating iron acquisition through the high-affinity iron uptake pathway. This chain is Copper-dependent transcription factor 1, found in Cryptococcus neoformans var. grubii serotype A (strain H99 / ATCC 208821 / CBS 10515 / FGSC 9487) (Filobasidiella neoformans var. grubii).